Consider the following 195-residue polypeptide: Imidazoleglycerol-phosphate dehydratase (195 aa).

The protein belongs to the imidazoleglycerol-phosphate dehydratase family.

It localises to the cytoplasm. It carries out the reaction D-erythro-1-(imidazol-4-yl)glycerol 3-phosphate = 3-(imidazol-4-yl)-2-oxopropyl phosphate + H2O. It participates in amino-acid biosynthesis; L-histidine biosynthesis; L-histidine from 5-phospho-alpha-D-ribose 1-diphosphate: step 6/9. The protein is Imidazoleglycerol-phosphate dehydratase of Cupriavidus taiwanensis (strain DSM 17343 / BCRC 17206 / CCUG 44338 / CIP 107171 / LMG 19424 / R1) (Ralstonia taiwanensis (strain LMG 19424)).